The sequence spans 72 residues: Hypertrehalosaemic prohormone (72 aa).

Residues 1 to 21 (MNHLVKVLIVVVAIALVLCEA) form the signal peptide. Q22 is subject to Pyrrolidone carboxylic acid. T31 is subject to Threonine amide.

The protein belongs to the AKH/HRTH/RPCH family. Expressed in corpora cardiaca.

The protein localises to the secreted. Hypertrehalosaemic factors are neuropeptides that elevate the level of trehalose in the hemolymph (trehalose is the major carbohydrate in the hemolymph of insects). This is Hypertrehalosaemic prohormone from Blaberus discoidalis (Tropical cockroach).